The sequence spans 211 residues: DNA-directed RNA polymerases I, II, and III subunit RPABC1 (211 aa).

The protein belongs to the archaeal Rpo5/eukaryotic RPB5 RNA polymerase subunit family. As to quaternary structure, component of the RNA polymerase I (Pol I), RNA polymerase II (Pol II) and RNA polymerase III (Pol III) complexes consisting of at least 13, 12 and 17 subunits, respectively. In RNA Pol II, this subunit is present in 2-fold molar excess over the other subunits.

It localises to the nucleus. DNA-dependent RNA polymerase catalyzes the transcription of DNA into RNA using the four ribonucleoside triphosphates as substrates. Common component of RNA polymerases I, II and III which synthesize ribosomal RNA precursors, mRNA precursors and many functional non-coding RNAs, and small RNAs, such as 5S rRNA and tRNAs, respectively. Pol II is the central component of the basal RNA polymerase II transcription machinery. Pols are composed of mobile elements that move relative to each other. In Pol II, RPB5 is part of the lower jaw surrounding the central large cleft and thought to grab the incoming DNA template. Seems to be the major component in this process. The polypeptide is DNA-directed RNA polymerases I, II, and III subunit RPABC1 (rpb-5) (Caenorhabditis elegans).